The primary structure comprises 256 residues: Large ribosomal subunit protein uL2 (256 aa).

The disordered stretch occupies residues Glu-208–Ser-230.

Belongs to the universal ribosomal protein uL2 family. As to expression, in larvae tissues examined: gut, brain imaginal disk, salivary glands, fat body, muscles, epidermis and trachaea.

It is found in the cytoplasm. In Drosophila melanogaster (Fruit fly), this protein is Large ribosomal subunit protein uL2 (RpL8).